The following is a 74-amino-acid chain: Sec-independent protein translocase protein TatA (74 aa).

A helical membrane pass occupies residues 1–21 (MGSIGMTELLLIFGIIVLLFG).

Belongs to the TatA/E family. As to quaternary structure, forms a complex with TatC.

Its subcellular location is the cell inner membrane. Its function is as follows. Part of the twin-arginine translocation (Tat) system that transports large folded proteins containing a characteristic twin-arginine motif in their signal peptide across membranes. TatA could form the protein-conducting channel of the Tat system. In Sulfurihydrogenibium sp. (strain YO3AOP1), this protein is Sec-independent protein translocase protein TatA.